A 210-amino-acid chain; its full sequence is Protein LURP-one-related 5 (210 aa).

The protein belongs to the LOR family.

In terms of biological role, might be related to the phospholipid scramblase and tubby-like superfamily of membrane tethered transcription factors. The protein is Protein LURP-one-related 5 of Arabidopsis thaliana (Mouse-ear cress).